Here is a 271-residue protein sequence, read N- to C-terminus: RxLR effector protein PITG_15679 (271 aa).

Positions 1–18 are cleaved as a signal peptide; that stretch reads MKVLQLIALTALVSSCVA. Residues 49-69 carry the RxLR-dEER motif; sequence RSLRRYDLEGLDSVNSNREER. Residues 212 to 271 enclose the Nudix hydrolase domain; it reads RLLSANVVMRLNDKGEKQILLISSSNPKKGDFLLPKGGWDKGEDVKKAALREVIEEGGVR. The Nudix box motif lies at 248–269; sequence GGWDKGEDVKKAALREVIEEGG.

It in the N-terminal section; belongs to the RxLR effector family. This sequence in the C-terminal section; belongs to the Nudix hydrolase family.

Its subcellular location is the secreted. It localises to the host cytoplasm. The protein resides in the host nucleus. Effector that enhances P.infestans colonization of Nicotiana benthamiana leaves. This chain is RxLR effector protein PITG_15679, found in Phytophthora infestans (strain T30-4) (Potato late blight agent).